The chain runs to 903 residues: Probable dipeptidyl-aminopeptidase B (903 aa).

Residues 1 to 83 are disordered; sequence MGKFEDDGNS…PLISSGTKTG (83 aa). Residues 1 to 90 are Cytoplasmic-facing; sequence MGKFEDDGNS…KTGSSSRLRK (90 aa). The segment covering 10–37 has biased composition (polar residues); the sequence is SESVPLTRQRSESLASQTSTDSGLSIAS. A helical; Signal-anchor for type II membrane protein transmembrane segment spans residues 91–111; sequence IVWLLVLLCVGGWVLSFVLFL. The Vacuolar segment spans residues 112 to 903; sequence TQKRPDTAAL…TANPKPQEST (792 aa). Positions 121–143 are disordered; it reads LSSASTVEIHEPGPATGGTSHGK. Asn-268, Asn-349, and Asn-640 each carry an N-linked (GlcNAc...) asparagine glycan. The active-site Charge relay system is the Ser-754. A glycan (N-linked (GlcNAc...) asparagine) is linked at Asn-808. Catalysis depends on charge relay system residues Asp-831 and His-864.

This sequence belongs to the peptidase S9B family.

Its subcellular location is the vacuole membrane. It carries out the reaction Release of an N-terminal dipeptide, Xaa-Yaa-|-Zaa-, from a polypeptide, preferentially when Yaa is Pro, provided Zaa is neither Pro nor hydroxyproline.. Its function is as follows. Type IV dipeptidyl-peptidase which removes N-terminal dipeptides sequentially from polypeptides having unsubstituted N-termini provided that the penultimate residue is proline. The polypeptide is Probable dipeptidyl-aminopeptidase B (dapB) (Penicillium rubens (strain ATCC 28089 / DSM 1075 / NRRL 1951 / Wisconsin 54-1255) (Penicillium chrysogenum)).